Consider the following 521-residue polypeptide: MMFEYEEDEDPMEQQKHEEFKHHSTDHSGSPQENPFRFSYDTGKRAASMFVTPSSEDLIAYGTKHLLDSPTAVQRSLVLNATTSLNIDCDLSSDDDLSPTTQRKICFCASQNPAETQEQGLRPAKSTLAISFPCHQHQITEDYTISAEIIGIGESGKVMACYQKVTGEKFALKVLRDSQKARREVELHWLTNAHENVVSILDIYENTFDNVKCLLMVVEFLEGGDLLSQFESQGSIPYTEKKVGEIIRQIGNAVMYLHDMNIAHRDIKLENILCSGTGDNCVYKLGDYGFAKRPERNVLMESPCCTPFYAPPEVLGRERYDKSCDMWSLGVAMYILLCGYPPFYSMKGVALSPGMRSRIANAYYAFPHEEWDCVSKDTKDDIRCLLRTNPSDRLTIHELMATPLVTGEPIVPGKHITTAIAIPGADESECGGGVFDDGFIVEEEETPDTVAEILPVPKSVRFLRDGVKAPRLHSIQEEVGRAMEIMRMGTDQVYIKNPTASCNNLFERRRAVHLSIPRVYC.

A compositionally biased stretch (acidic residues) spans 1-12 (MMFEYEEDEDPM). Positions 1–36 (MMFEYEEDEDPMEQQKHEEFKHHSTDHSGSPQENPF) are disordered. Residues 13–26 (EQQKHEEFKHHSTD) are compositionally biased toward basic and acidic residues. Residues 144–405 (TISAEIIGIG…IHELMATPLV (262 aa)) form the Protein kinase domain. ATP contacts are provided by residues 150–158 (IGIGESGKV) and K173. The active-site Proton acceptor is D266.

This sequence belongs to the protein kinase superfamily. CAMK Ser/Thr protein kinase family. As to quaternary structure, may interact (via protein kinase domain) with unc-22 (via protein kinase and CRD domains). Requires Mg(2+) as cofactor. Post-translationally, autophosphorylated in vitro. In terms of tissue distribution, expressed in body wall muscles (at protein level). Expressed in intestine.

The protein resides in the cytoplasm. It localises to the myofibril. It is found in the sarcomere. The protein localises to the a band. It carries out the reaction L-seryl-[protein] + ATP = O-phospho-L-seryl-[protein] + ADP + H(+). The enzyme catalyses L-threonyl-[protein] + ATP = O-phospho-L-threonyl-[protein] + ADP + H(+). Serine/threonine-protein kinase which may play a role in body wall muscle contraction. May phosphorylate unc-22/twitchin. The chain is MAP kinase-activated protein kinase mak-1 from Caenorhabditis elegans.